A 358-amino-acid polypeptide reads, in one-letter code: Peptide chain release factor 1 (358 aa).

Glutamine 237 bears the N5-methylglutamine mark.

Belongs to the prokaryotic/mitochondrial release factor family. Methylated by PrmC. Methylation increases the termination efficiency of RF1.

It is found in the cytoplasm. Its function is as follows. Peptide chain release factor 1 directs the termination of translation in response to the peptide chain termination codons UAG and UAA. The sequence is that of Peptide chain release factor 1 from Streptomyces avermitilis (strain ATCC 31267 / DSM 46492 / JCM 5070 / NBRC 14893 / NCIMB 12804 / NRRL 8165 / MA-4680).